Consider the following 448-residue polypeptide: Homogentisate 1,2-dioxygenase (448 aa).

The Proton acceptor role is filled by H303. Fe cation is bound by residues H346 and E352. Positions 361 and 382 each coordinate homogentisate. H382 is a Fe cation binding site.

Belongs to the homogentisate dioxygenase family. As to quaternary structure, hexamer; dimer of trimers. Fe cation is required as a cofactor.

The enzyme catalyses homogentisate + O2 = 4-maleylacetoacetate + H(+). It participates in amino-acid degradation; L-phenylalanine degradation; acetoacetate and fumarate from L-phenylalanine: step 4/6. In terms of biological role, involved in the catabolism of homogentisate (2,5-dihydroxyphenylacetate or 2,5-OH-PhAc), a central intermediate in the degradation of phenylalanine and tyrosine. Catalyzes the oxidative ring cleavage of the aromatic ring of homogentisate to yield maleylacetoacetate. This is Homogentisate 1,2-dioxygenase from Rhodopseudomonas palustris (strain TIE-1).